We begin with the raw amino-acid sequence, 197 residues long: Imidazoleglycerol-phosphate dehydratase (197 aa).

Belongs to the imidazoleglycerol-phosphate dehydratase family.

The protein resides in the cytoplasm. It carries out the reaction D-erythro-1-(imidazol-4-yl)glycerol 3-phosphate = 3-(imidazol-4-yl)-2-oxopropyl phosphate + H2O. It functions in the pathway amino-acid biosynthesis; L-histidine biosynthesis; L-histidine from 5-phospho-alpha-D-ribose 1-diphosphate: step 6/9. This chain is Imidazoleglycerol-phosphate dehydratase, found in Laribacter hongkongensis (strain HLHK9).